The following is a 334-amino-acid chain: F-box only protein 16 (334 aa).

Residues Leu86 to Lys132 enclose the F-box domain. Disordered stretches follow at residues Pro168–Ser222 and Leu314–Ser334. Low complexity predominate over residues Ser194–Ser204. A compositionally biased stretch (basic and acidic residues) spans Asn210–Ser222. Low complexity predominate over residues Leu323–Ser334.

In terms of assembly, part of a SCF (SKP1-cullin-F-box) protein ligase complex.

Its function is as follows. Probably recognizes and binds to some phosphorylated proteins and promotes their ubiquitination and degradation. This is F-box only protein 16 (Fbxo16) from Mus musculus (Mouse).